Here is a 126-residue protein sequence, read N- to C-terminus: Aspartate 1-decarboxylase (126 aa).

Ser25 serves as the catalytic Schiff-base intermediate with substrate; via pyruvic acid. Ser25 carries the post-translational modification Pyruvic acid (Ser). Thr57 lines the substrate pocket. Tyr58 (proton donor) is an active-site residue. 73–75 (GAA) is a substrate binding site.

The protein belongs to the PanD family. As to quaternary structure, heterooctamer of four alpha and four beta subunits. Requires pyruvate as cofactor. Is synthesized initially as an inactive proenzyme, which is activated by self-cleavage at a specific serine bond to produce a beta-subunit with a hydroxyl group at its C-terminus and an alpha-subunit with a pyruvoyl group at its N-terminus.

The protein localises to the cytoplasm. The catalysed reaction is L-aspartate + H(+) = beta-alanine + CO2. The protein operates within cofactor biosynthesis; (R)-pantothenate biosynthesis; beta-alanine from L-aspartate: step 1/1. Its function is as follows. Catalyzes the pyruvoyl-dependent decarboxylation of aspartate to produce beta-alanine. This Halorhodospira halophila (strain DSM 244 / SL1) (Ectothiorhodospira halophila (strain DSM 244 / SL1)) protein is Aspartate 1-decarboxylase.